The primary structure comprises 3946 residues: Hybrid PKS-NRPS synthetase lepA (3946 aa).

Positions 9-440 (VEPIAIVGSA…GTNAHVILEG (432 aa)) constitute a Ketosynthase family 3 (KS3) domain. Active-site for beta-ketoacyl synthase activity residues include cysteine 183, histidine 320, and histidine 363. Residues 553–871 (IFTGQGAQWA…PYAGIMRRAT (319 aa)) form a malonyl-CoA:ACP transacylase (MAT) domain region. Positions 945 to 1073 (HELLGRRAPD…GRLILFKGEG (129 aa)) are N-terminal hotdog fold. The tract at residues 945–1238 (HELLGRRAPD…RLQSFTEAKA (294 aa)) is dehydratase (DH) domain. Positions 945 to 1239 (HELLGRRAPD…LQSFTEAKAL (295 aa)) constitute a PKS/mFAS DH domain. Histidine 977 acts as the Proton acceptor; for dehydratase activity in catalysis. The tract at residues 1088 to 1239 (LSPLDREMFY…LQSFTEAKAL (152 aa)) is C-terminal hotdog fold. Aspartate 1147 functions as the Proton donor; for dehydratase activity in the catalytic mechanism. The methyltransferase (MT) domain stretch occupies residues 1380–1580 (LLNRFYTDGR…ATVSDLPSDG (201 aa)). The tract at residues 2093–2266 (TYWMIGLNSE…AASVIDIGLV (174 aa)) is ketoreductase (KR) domain. The span at 2352 to 2365 (SSQDSDQSNSTSAS) shows a compositional bias: low complexity. Residues 2352-2372 (SSQDSDQSNSTSASIRDQVSS) are disordered. In terms of domain architecture, Carrier 1 spans 2378 to 2455 (EGTDVLLRCF…EICAEAIQKF (78 aa)). Position 2415 is an O-(pantetheine 4'-phosphoryl)serine (serine 2415). Residues 2474–2531 (KQATASPPEIGREEAQSTSRAGILPTDQDNDNSSDSESQRKSGASSSSGSGTRTPTSI) are disordered. Positions 2508 to 2530 (DSESQRKSGASSSSGSGTRTPTS) are enriched in low complexity. Residues 2547 to 2976 (PMSYAQSRLW…MQIQDGLLND (430 aa)) are condensation (C) domain. The segment at 3000–3402 (FSQRAATDAN…GGLIFMGRLD (403 aa)) is adenylation (A) (KR) domain. Residues 3492 to 3511 (GKVDRKALQDKPLPTEPDSS) form a disordered region. A Carrier 2 domain is found at 3515–3594 (EALSLAEGEL…RMATLIDAEK (80 aa)). Serine 3554 is subject to O-(pantetheine 4'-phosphoryl)serine. Residues 3633 to 3833 (LTGSTGFLGM…RFSVLMKVVP (201 aa)) form a reductase (RED) domain region.

This sequence in the C-terminal section; belongs to the NRP synthetase family.

Hybrid PKS-NRPS synthetase; part of the gene cluster 23 that mediates the biosynthesis of a family of 2-pyridones known as leporins. The hybrid PKS-NRPS synthetase lepA and the enoyl reductase lepG are responsible for fusion of phenylalanine with a hexaketide and subsequent release of the stable tetramic acid precursor, pre-leporin C. Because lepA lacks a designated enoylreductase (ER) domain, the required activity is provided the enoyl reductase lepG. It is possible that the dehydrogenase lepF also participates in production of pre-leporin C. Cytochrome P450 monooxygenase lepH is then required for the ring expansion step to yield leporin C. Leporin C is then presumably further oxidized by the N-hydroxylase lepD to form leporin B. LepI may possess a function in biosynthesis upstream of lepA. Leporin B is further oxidized in the presence of ferric ion to give the leporin B trimer-iron chelate, but whether or not this reaction is catalyzed by an enzyme in the pathway or by ferric ion is not determined yet. In Aspergillus flavus (strain ATCC 200026 / FGSC A1120 / IAM 13836 / NRRL 3357 / JCM 12722 / SRRC 167), this protein is Hybrid PKS-NRPS synthetase lepA.